Reading from the N-terminus, the 115-residue chain is MSSKPTQAFSLKTRQAVDEDALLTEEDRVVKEATKGEDCTTRRRACKNCTCGRAELERKMLAEGKKVEMPQMPAGGCGNCAKGDAFRCATCPFLGQPAFDNTSDGKVKLNLTDDI.

The tract at residues 30-115 (VKEATKGEDC…KVKLNLTDDI (86 aa)) is disordered. [2Fe-2S] cluster-binding residues include C39, C46, C49, and C51. The fe-S binding site A stretch occupies residues 39–51 (CTTRRRACKNCTC). [4Fe-4S] cluster contacts are provided by C77, C80, C88, and C91. 2 consecutive short sequence motifs (cx2C motif) follow at residues 77–80 (CGNC) and 88–91 (CATC). Residues 77-91 (CGNCAKGDAFRCATC) are fe-S binding site B.

It belongs to the anamorsin family. As to quaternary structure, monomer. Requires [2Fe-2S] cluster as cofactor. [4Fe-4S] cluster is required as a cofactor.

It localises to the cytoplasm. The protein localises to the mitochondrion intermembrane space. Its function is as follows. Component of the cytosolic iron-sulfur (Fe-S) protein assembly (CIA) machinery. Required for the maturation of extramitochondrial Fe-S proteins. Part of an electron transfer chain functioning in an early step of cytosolic Fe-S biogenesis, facilitating the de novo assembly of a [4Fe-4S] cluster on the cytosolic Fe-S scaffold complex. Electrons are transferred from NADPH via a FAD- and FMN-containing diflavin oxidoreductase. Together with the diflavin oxidoreductase, also required for the assembly of the diferric tyrosyl radical cofactor of ribonucleotide reductase (RNR), probably by providing electrons for reduction during radical cofactor maturation in the catalytic small subunit. The polypeptide is Anamorsin homolog 2 (Trypanosoma cruzi (strain CL Brener)).